The chain runs to 311 residues: Pyrimidine-specific ribonucleoside hydrolase RihA (311 aa).

His-240 is a catalytic residue.

This sequence belongs to the IUNH family. RihA subfamily.

Its function is as follows. Hydrolyzes cytidine or uridine to ribose and cytosine or uracil, respectively. This Shigella flexneri serotype 5b (strain 8401) protein is Pyrimidine-specific ribonucleoside hydrolase RihA.